Consider the following 759-residue polypeptide: Arylphorin subunit C223 (759 aa).

The first 15 residues, M1–A15, serve as a signal peptide directing secretion.

Belongs to the hemocyanin family. Heterohexamer. Fat body.

The protein localises to the secreted. Its subcellular location is the extracellular space. Arylphorin is a larval storage protein (LSP) which may serve as a storage protein used primarily as a source of aromatic amino acids for protein synthesis during metamorphosis. It is a constituent of the sclerotizing system of the cuticle, and serves as a carrier for ecdysteroid hormone. This chain is Arylphorin subunit C223, found in Calliphora vicina (Blue blowfly).